Consider the following 421-residue polypeptide: Histidine--tRNA ligase (421 aa).

It belongs to the class-II aminoacyl-tRNA synthetase family. Homodimer.

It is found in the cytoplasm. The enzyme catalyses tRNA(His) + L-histidine + ATP = L-histidyl-tRNA(His) + AMP + diphosphate + H(+). This Francisella tularensis subsp. tularensis (strain SCHU S4 / Schu 4) protein is Histidine--tRNA ligase.